Reading from the N-terminus, the 249-residue chain is MKIILSPAKKMIVDTDNLVPVELPVYIDKTAEVLNWIKSKSKEELKAIWKCNDKIAEQNFNRLENMDLYNRLTPAVLAYEGIAFQYMAPSVFENSQFEYVQNHLRILSAFYGVLKPMDGVTPYRLEMQAKVEIGDAKNLYEYWNDMLYRSVIDESRIIINLASKEYSKCIEKYLTPKDKYITISFCEQAGNKLVTKGTYAKMARGEMVRFMAENDIENPDDIKKFDRLGYIFRSDLSSDSKYVFERKIA.

The protein belongs to the UPF0246 family.

The sequence is that of UPF0246 protein EUBREC_1226 from Agathobacter rectalis (strain ATCC 33656 / DSM 3377 / JCM 17463 / KCTC 5835 / VPI 0990) (Eubacterium rectale).